The chain runs to 305 residues: Ribonuclease BN (305 aa).

7 residues coordinate Zn(2+): H64, H66, D68, H69, H141, D212, and H270. The active-site Proton acceptor is D68.

The protein belongs to the RNase Z family. RNase BN subfamily. As to quaternary structure, homodimer. Zn(2+) is required as a cofactor.

In terms of biological role, zinc phosphodiesterase, which has both exoribonuclease and endoribonuclease activities. The protein is Ribonuclease BN of Salmonella gallinarum (strain 287/91 / NCTC 13346).